Reading from the N-terminus, the 476-residue chain is Bifunctional protein HldE (476 aa).

The segment at 1–318 (MKVTLPDFRR…ENAIRGRAET (318 aa)) is ribokinase. 195-198 (NLSE) serves as a coordination point for ATP. Asp-264 is a catalytic residue. The tract at residues 344 to 476 (MTNGIFDILH…IIQSIKNGRG (133 aa)) is cytidylyltransferase.

It in the N-terminal section; belongs to the carbohydrate kinase PfkB family. In the C-terminal section; belongs to the cytidylyltransferase family. In terms of assembly, homodimer.

It catalyses the reaction D-glycero-beta-D-manno-heptose 7-phosphate + ATP = D-glycero-beta-D-manno-heptose 1,7-bisphosphate + ADP + H(+). The enzyme catalyses D-glycero-beta-D-manno-heptose 1-phosphate + ATP + H(+) = ADP-D-glycero-beta-D-manno-heptose + diphosphate. The protein operates within nucleotide-sugar biosynthesis; ADP-L-glycero-beta-D-manno-heptose biosynthesis; ADP-L-glycero-beta-D-manno-heptose from D-glycero-beta-D-manno-heptose 7-phosphate: step 1/4. It participates in nucleotide-sugar biosynthesis; ADP-L-glycero-beta-D-manno-heptose biosynthesis; ADP-L-glycero-beta-D-manno-heptose from D-glycero-beta-D-manno-heptose 7-phosphate: step 3/4. Catalyzes the phosphorylation of D-glycero-D-manno-heptose 7-phosphate at the C-1 position to selectively form D-glycero-beta-D-manno-heptose-1,7-bisphosphate. In terms of biological role, catalyzes the ADP transfer from ATP to D-glycero-beta-D-manno-heptose 1-phosphate, yielding ADP-D-glycero-beta-D-manno-heptose. The polypeptide is Bifunctional protein HldE (Yersinia pseudotuberculosis serotype O:1b (strain IP 31758)).